The following is a 519-amino-acid chain: Glutamate--cysteine ligase (519 aa).

This sequence belongs to the glutamate--cysteine ligase type 1 family. Type 1 subfamily.

The catalysed reaction is L-cysteine + L-glutamate + ATP = gamma-L-glutamyl-L-cysteine + ADP + phosphate + H(+). The protein operates within sulfur metabolism; glutathione biosynthesis; glutathione from L-cysteine and L-glutamate: step 1/2. This is Glutamate--cysteine ligase from Yersinia enterocolitica serotype O:8 / biotype 1B (strain NCTC 13174 / 8081).